Consider the following 553-residue polypeptide: Glucose-6-phosphate isomerase (553 aa).

Residues 164–165 (GS), 215–220 (SKTFTT), glutamine 359, glutamate 363, histidine 394, and lysine 516 contribute to the D-glucose 6-phosphate site. The Proton donor role is filled by glutamate 363. Residues histidine 394 and lysine 516 contribute to the active site.

It belongs to the GPI family. As to quaternary structure, homodimer.

It is found in the cytoplasm. The protein resides in the cytosol. It carries out the reaction alpha-D-glucose 6-phosphate = beta-D-fructose 6-phosphate. It functions in the pathway carbohydrate degradation; glycolysis; D-glyceraldehyde 3-phosphate and glycerone phosphate from D-glucose: step 2/4. Its function is as follows. In the cytoplasm, catalyzes the conversion of glucose-6-phosphate to fructose-6-phosphate, the second step in glycolysis, and the reverse reaction during gluconeogenesis. The protein is Glucose-6-phosphate isomerase (pgiA) of Aspergillus oryzae (strain ATCC 42149 / RIB 40) (Yellow koji mold).